Consider the following 118-residue polypeptide: Small ribosomal subunit protein mS37 (118 aa).

The region spanning 42-84 (EATCITEMSVMMACWKQNEFRDDACRKEIQGFLDCAARAQEAR) is the CHCH domain. 2 short sequence motifs (cx9C motif) span residues 45 to 55 (CITEMSVMMAC) and 66 to 76 (CRKEIQGFLDC). 2 cysteine pairs are disulfide-bonded: cysteine 45–cysteine 76 and cysteine 55–cysteine 66.

Belongs to the mitochondrion-specific ribosomal protein mS37 family. As to quaternary structure, component of the mitochondrial small ribosomal subunit (mt-SSU). Mature mammalian 55S mitochondrial ribosomes consist of a small (28S) and a large (39S) subunit. The 28S small subunit contains a 12S ribosomal RNA (12S mt-rRNA) and 30 different proteins. The 39S large subunit contains a 16S rRNA (16S mt-rRNA), a copy of mitochondrial valine transfer RNA (mt-tRNA(Val)), which plays an integral structural role, and 52 different proteins.

The protein localises to the mitochondrion. Its subcellular location is the nucleus. This Homo sapiens (Human) protein is Small ribosomal subunit protein mS37 (CHCHD1).